We begin with the raw amino-acid sequence, 655 residues long: Very long-chain specific acyl-CoA dehydrogenase, mitochondrial (655 aa).

The N-terminal 40 residues, 1–40 (MQAARIAPSLGRQLLRFGGGSSRPTALLGQPWPGPARRPY), are a transit peptide targeting the mitochondrion. The interval 41–482 (AGGAAQLALD…ALQGCMDKGK (442 aa)) is catalytic. Residue Lys-51 is modified to N6-acetyllysine. Lys-71 carries the N6-acetyllysine; alternate modification. Lys-71 is subject to N6-succinyllysine; alternate. Lys-195 carries the post-translational modification N6-succinyllysine. An FAD-binding site is contributed by 214–223 (FCLTEPSSGS). The residue at position 237 (Cys-237) is an S-nitrosocysteine. Lys-239 bears the N6-acetyllysine; alternate mark. Lys-239 carries the post-translational modification N6-succinyllysine; alternate. Residue 249 to 251 (WIS) participates in FAD binding. N6-acetyllysine; alternate occurs at positions 276 and 278. An N6-succinyllysine; alternate mark is found at Lys-276 and Lys-278. Residue Lys-298 is modified to N6-acetyllysine. Lys-331 is modified (N6-acetyllysine; alternate). Lys-331 carries the N6-succinyllysine; alternate modification. Lys-372 carries the N6-succinyllysine modification. 461 to 463 (FEG) serves as a coordination point for substrate. The Proton acceptor role is filled by Glu-462. FAD is bound at residue 464–466 (TND). An N6-acetyllysine; alternate modification is found at Lys-482. Lys-482 is modified (N6-succinyllysine; alternate). The tract at residues 483–516 (ELSGLGSALKNPFGNAGLLLGEAGKQLRRRAGLG) is membrane-anchoring. A phosphoserine mark is found at Ser-517 and Ser-522. N6-acetyllysine is present on Lys-550. Lys-556 carries the N6-acetyllysine; alternate modification. Lys-556 is subject to N6-succinyllysine; alternate. Gln-562 is a binding site for FAD. At Lys-639 the chain carries N6-succinyllysine.

Belongs to the acyl-CoA dehydrogenase family. As to quaternary structure, homodimer. Homodimerizes after import into the mitochondrion. FAD is required as a cofactor. In terms of processing, S-nitrosylation at Cys-237 in liver improves catalytic efficiency.

It is found in the mitochondrion inner membrane. The catalysed reaction is a very-long-chain 2,3-saturated fatty acyl-CoA + oxidized [electron-transfer flavoprotein] + H(+) = a very-long-chain (2E)-enoyl-CoA + reduced [electron-transfer flavoprotein]. The enzyme catalyses dodecanoyl-CoA + oxidized [electron-transfer flavoprotein] + H(+) = (2E)-dodecenoyl-CoA + reduced [electron-transfer flavoprotein]. It carries out the reaction tetradecanoyl-CoA + oxidized [electron-transfer flavoprotein] + H(+) = (2E)-tetradecenoyl-CoA + reduced [electron-transfer flavoprotein]. It catalyses the reaction oxidized [electron-transfer flavoprotein] + hexadecanoyl-CoA + H(+) = (2E)-hexadecenoyl-CoA + reduced [electron-transfer flavoprotein]. The catalysed reaction is octadecanoyl-CoA + oxidized [electron-transfer flavoprotein] + H(+) = (2E)-octadecenoyl-CoA + reduced [electron-transfer flavoprotein]. The enzyme catalyses eicosanoyl-CoA + oxidized [electron-transfer flavoprotein] + H(+) = (2E)-eicosenoyl-CoA + reduced [electron-transfer flavoprotein]. It carries out the reaction docosanoyl-CoA + oxidized [electron-transfer flavoprotein] + H(+) = (2E)-docosenoyl-CoA + reduced [electron-transfer flavoprotein]. It catalyses the reaction tetracosanoyl-CoA + oxidized [electron-transfer flavoprotein] + H(+) = (2E)-tetracosenoyl-CoA + reduced [electron-transfer flavoprotein]. It participates in lipid metabolism; mitochondrial fatty acid beta-oxidation. In terms of biological role, very long-chain specific acyl-CoA dehydrogenase is one of the acyl-CoA dehydrogenases that catalyze the first step of mitochondrial fatty acid beta-oxidation, an aerobic process breaking down fatty acids into acetyl-CoA and allowing the production of energy from fats. The first step of fatty acid beta-oxidation consists in the removal of one hydrogen from C-2 and C-3 of the straight-chain fatty acyl-CoA thioester, resulting in the formation of trans-2-enoyl-CoA. Among the different mitochondrial acyl-CoA dehydrogenases, very long-chain specific acyl-CoA dehydrogenase acts specifically on acyl-CoAs with saturated 12 to 24 carbons long primary chains. This chain is Very long-chain specific acyl-CoA dehydrogenase, mitochondrial, found in Macaca fascicularis (Crab-eating macaque).